Consider the following 541-residue polypeptide: Zinc finger protein 513 (541 aa).

Residues 1–120 (MPRRKQSHPQ…ARGERPGPAC (120 aa)) are disordered. A compositionally biased stretch (acidic residues) spans 44 to 55 (LEFEEEEEEEEG). A phosphoserine mark is found at S85 and S96. The span at 103–115 (EPARGPGEARGER) shows a compositional bias: basic and acidic residues. 8 consecutive C2H2-type zinc fingers follow at residues 150 to 172 (YSCRLCAFVSHYSSHLKRHMQTH), 178 to 200 (FRCGRCPYASAQLVNLTRHTRTH), 206 to 228 (YRCPHCPFACSSLGNLRRHQRTH), 360 to 382 (FACSLCPFATHYPNHLARHMKTH), 388 to 410 (FRCARCPYASAHLDNLKRHQRVH), 416 to 438 (YKCPLCPYACGNLANLKRHGRIH), 444 to 466 (FRCSLCNYSCNQSMNLKRHMLRH), and 472 to 494 (FRCATCAYTTGHWDNYKRHQKVH). The interval 492–541 (KVHGHGGAGGPGLSAPEGWAPPHSPPSVLSTRGSAALGATGSRALHTDSP) is disordered.

This sequence belongs to the krueppel C2H2-type zinc-finger protein family. Binds DNA. Can associate with the proximal promoter regions of PAX6 and SP4, and their known targets including ARR3, RHO, OPN1MW2 and OPN1SW.

Its subcellular location is the nucleus. Its function is as follows. Transcriptional regulator that plays a role in retinal development and maintenance. In Rattus norvegicus (Rat), this protein is Zinc finger protein 513 (Znf513).